A 248-amino-acid chain; its full sequence is MGIKVGVLGAKGRVGQTIVAAVNESDDLELVAEIGVDDDLSLLVDNGAEVVVDFTTPNAVMGNLEFCINNGISAVVGTTGFDDARLEQVRAWLEGKDNVGVLIAPNFAISAVLTMVFSKQAARFFESAEVIELHHPNKLDAPSGTAIHTAQGIAAARKEAGMDAQPDATEQALEGSRGASVDGIPVHAVRMSGMVAHEQVIFGTQGQTLTIKQDSYDRNSFAPGVLVGVRNIAQHPGLVVGLEHYLGL.

Residues 9–14 (GAKGRV), 77–79 (GTT), and 104–107 (APNF) contribute to the NAD(+) site. His-134 functions as the Proton donor/acceptor in the catalytic mechanism. Residue His-135 participates in (S)-2,3,4,5-tetrahydrodipicolinate binding. Lys-138 functions as the Proton donor in the catalytic mechanism. A (S)-2,3,4,5-tetrahydrodipicolinate-binding site is contributed by 144 to 145 (GT).

This sequence belongs to the DapB family.

It is found in the cytoplasm. It carries out the reaction (S)-2,3,4,5-tetrahydrodipicolinate + NAD(+) + H2O = (2S,4S)-4-hydroxy-2,3,4,5-tetrahydrodipicolinate + NADH + H(+). The catalysed reaction is (S)-2,3,4,5-tetrahydrodipicolinate + NADP(+) + H2O = (2S,4S)-4-hydroxy-2,3,4,5-tetrahydrodipicolinate + NADPH + H(+). It functions in the pathway amino-acid biosynthesis; L-lysine biosynthesis via DAP pathway; (S)-tetrahydrodipicolinate from L-aspartate: step 4/4. Functionally, catalyzes the conversion of 4-hydroxy-tetrahydrodipicolinate (HTPA) to tetrahydrodipicolinate. This chain is 4-hydroxy-tetrahydrodipicolinate reductase, found in Corynebacterium glutamicum (strain R).